Reading from the N-terminus, the 279-residue chain is Methyltransferase trt5 (279 aa).

S-adenosyl-L-methionine is bound by residues 124 to 125 (DI) and 152 to 153 (DV).

The protein belongs to the class I-like SAM-binding methyltransferase superfamily. In terms of assembly, homodimer.

The protein operates within secondary metabolite biosynthesis; terpenoid biosynthesis. Functionally, methyltransferase; part of the gene cluster that mediates the biosynthesis of terretonin, a fungal meroterpenoid that acts as a mycotoxin. The first step of the pathway is the synthesis of 3,5-dimethylorsellinic acid (DMOA) by the polyketide synthase trt4. DMOA is then prenylated into farnesyl-DMOA by the polyprenyl transferase trt2. Methylation by the methyltransferase trt5 then leads to farnesyl-DMOA methyl ester which is further subject to epoxidation by the FAD-dependent monooxygenase trt8 to yield epoxyfarnesyl-DMOA methyl ester. Cyclization of epoxyfarnesyl-DMOA methyl ester by the terpene cyclase trt1 leads to a tetracycle intermediate which is in turn converted to preterretonin. Dehydrogenase trt9 comes next to transform preterretonin to preterrenoid. The FAD-dependent monooxygenase trt3 is then required for the C-hydroxylation at C16 of preterrenoid to yield terrenoid. The cytochrome P450 trt6 catalyzes three successive oxidations to transform terrenoid into an unstable intermediate, which then undergoes the D-ring expansion and unusual rearrangement of the methoxy group to afford the core skeleton of terretonin. Trt14 catalyzes the D-ring expansion of terretonin involving intramolecular methoxy rearrangement as well as the hydrolysis of the expanded D-ring and the methyl ester moiety. Finally, the nonheme iron-dependent dioxygenase trt7 accomplishes the last two oxidation reactions steps to complete the biosynthesis of terretonin. Terretonin C is produced via spontaneous decarboxylation of the terretonin precursor. Another shunt product of the terretonin biosynthesis is dihydrofarnesyl-DMOA, derived from epoxyfarnesyl-DMOA through hydrolysis of the epoxide. The sequence is that of Methyltransferase trt5 from Aspergillus terreus (strain NIH 2624 / FGSC A1156).